Here is an 86-residue protein sequence, read N- to C-terminus: Large ribosomal subunit protein bL27 (86 aa).

Positions 1–23 are disordered; the sequence is MAHKKAGGSTRNGRDSESKRLGV.

The protein belongs to the bacterial ribosomal protein bL27 family.

In Alkalilimnicola ehrlichii (strain ATCC BAA-1101 / DSM 17681 / MLHE-1), this protein is Large ribosomal subunit protein bL27.